A 415-amino-acid polypeptide reads, in one-letter code: MIDLLWISSDGHPQLFYQFINIPFAFLFHCLSSQGHLSIINRYVYLAMGGFMLAIATMGPYSSLLFLSAIKLLLLIHYIHPMHLHRWILGLQMCWQTCWHLYVQYQIYWLQEAPDSRLLLAISALMLMTQRISSLSLDFQEGTISNQSILIPFLTYSLYFPALLGGPLCSFNAFVQSVERQHTSMTSYLGNLTSKISQVIVLVWIKQLFSELLKSATFNIDSVCLDVLWIWIFSLTLRLNYYAHWKMSECVNNAAGLGVYFHKHSGQTSWDELSDGSVLVTEASSRPSVFARKWNQTTVDWLRKIVFNRTSRSPLFMTFGFSALWHGLHPGQILGFLIWAVTVQADYKLHRFSHPKLNSLWRKRLYVCVNWAFTQLTVACVVVCVELQSLASVKLLWSSCIAVFPLLSALILIIL.

Residues 1 to 6 lie on the Lumenal side of the membrane; that stretch reads MIDLLW. A helical transmembrane segment spans residues 7 to 28; that stretch reads ISSDGHPQLFYQFINIPFAFLF. The Cytoplasmic portion of the chain corresponds to 29-42; it reads HCLSSQGHLSIINR. A helical membrane pass occupies residues 43–58; that stretch reads YVYLAMGGFMLAIATM. At 59–61 the chain is on the lumenal side; that stretch reads GPY. Residues 62–78 traverse the membrane as a helical segment; it reads SSLLFLSAIKLLLLIHY. Residues 79–84 are Cytoplasmic-facing; the sequence is IHPMHL. The chain crosses the membrane as a helical span at residues 85–103; that stretch reads HRWILGLQMCWQTCWHLYV. The Lumenal segment spans residues 104–122; the sequence is QYQIYWLQEAPDSRLLLAI. Residues 123-138 form a helical membrane-spanning segment; sequence SALMLMTQRISSLSLD. At 139 to 193 the chain is on the cytoplasmic side; that stretch reads FQEGTISNQSILIPFLTYSLYFPALLGGPLCSFNAFVQSVERQHTSMTSYLGNLT. The chain crosses the membrane as a helical span at residues 194-214; sequence SKISQVIVLVWIKQLFSELLK. Residues 215–227 are Lumenal-facing; sequence SATFNIDSVCLDV. Residues 228–247 traverse the membrane as a helical segment; sequence LWIWIFSLTLRLNYYAHWKM. The Cytoplasmic segment spans residues 248-312; that stretch reads SECVNNAAGL…RKIVFNRTSR (65 aa). Residues Asn295 and His326 contribute to the active site. Residues 313–326 traverse the membrane as a helical segment; the sequence is SPLFMTFGFSALWH. Residues 327 to 328 are Lumenal-facing; it reads GL. A helical membrane pass occupies residues 329–345; that stretch reads HPGQILGFLIWAVTVQA. Residues 346–364 lie on the Cytoplasmic side of the membrane; it reads DYKLHRFSHPKLNSLWRKR. Residues 365–385 form a helical membrane-spanning segment; it reads LYVCVNWAFTQLTVACVVVCV. Residues 386-394 lie on the Lumenal side of the membrane; the sequence is ELQSLASVK. The helical transmembrane segment at 395 to 415 threads the bilayer; sequence LLWSSCIAVFPLLSALILIIL.

Belongs to the membrane-bound acyltransferase family. Monomer. Post-translationally, not glycosylated.

The protein localises to the endoplasmic reticulum membrane. It catalyses the reaction octanoyl-CoA + L-seryl-[protein] = O-octanoyl-L-seryl-[protein] + CoA. It carries out the reaction decanoyl-CoA + L-seryl-[protein] = O-decanoyl-L-seryl-[protein] + CoA. The enzyme catalyses L-seryl-[protein] + acetyl-CoA = O-acetyl-L-seryl-[protein] + CoA. The catalysed reaction is L-seryl-[protein] + butanoyl-CoA = O-butanoyl-L-seryl-[protein] + CoA. It catalyses the reaction pentanoyl-CoA + L-seryl-[protein] = O-pentanoyl-L-seryl-[protein] + CoA. It carries out the reaction hexanoyl-CoA + L-seryl-[protein] = O-hexanoyl-L-seryl-[protein] + CoA. The enzyme catalyses heptanoyl-CoA + L-seryl-[protein] = O-heptanoyl-L-seryl-[protein] + CoA. The catalysed reaction is nonanoyl-CoA + L-seryl-[protein] = O-nonanoyl-L-seryl-[protein] + CoA. It catalyses the reaction L-seryl-[protein] + dodecanoyl-CoA = O-dodecanoyl-L-seryl-[protein] + CoA. It carries out the reaction L-seryl-[protein] + tetradecanoyl-CoA = O-tetradecanoyl-L-seryl-[protein] + CoA. The enzyme catalyses a fatty acyl-CoA + L-seryl-[protein] = O-fatty acyl-L-seryl-[protein] + CoA. Catalyzes ghrelin acylation at 'Ser-3' using preferentially octanoyl-CoA, hexanoyl-CoA and decanoyl-CoA as acyl-CoA donors leading to ghrelin activity. In vitro uses also acyl-CoA donors of different lengths from short-chain (C2) to long-chain fatty acids (C16) knowing that acyl-CoA donors from butanoyl-CoA (C4) to dodecanoyl-CoA (C12) are more efficient compared to longer acyl-CoA donors, such as myristoyl-CoA (C14) and palmitoyl-CoA (C16) that are not efficient. This Danio rerio (Zebrafish) protein is Membrane-bound ghrelin O-acyltransferase mboat4.